The chain runs to 348 residues: Flagellar P-ring protein (348 aa).

The first 16 residues, 1-16, serve as a signal peptide directing secretion; sequence MRIFLLCLALSLSVFA.

The protein belongs to the FlgI family. As to quaternary structure, the basal body constitutes a major portion of the flagellar organelle and consists of four rings (L,P,S, and M) mounted on a central rod.

It localises to the periplasm. The protein localises to the bacterial flagellum basal body. Functionally, assembles around the rod to form the L-ring and probably protects the motor/basal body from shearing forces during rotation. In Campylobacter lari (strain RM2100 / D67 / ATCC BAA-1060), this protein is Flagellar P-ring protein.